Consider the following 426-residue polypeptide: Dihydroorotase (426 aa).

Residues His62 and His64 each coordinate Zn(2+). Residues 64-66 (HLR) and Asn96 contribute to the substrate site. The Zn(2+) site is built by Asp154, His181, His234, and Asp307. Asp307 is a catalytic residue. His311 provides a ligand contact to substrate.

It belongs to the metallo-dependent hydrolases superfamily. DHOase family. Class I DHOase subfamily. Zn(2+) serves as cofactor.

The enzyme catalyses (S)-dihydroorotate + H2O = N-carbamoyl-L-aspartate + H(+). Its pathway is pyrimidine metabolism; UMP biosynthesis via de novo pathway; (S)-dihydroorotate from bicarbonate: step 3/3. In terms of biological role, catalyzes the reversible cyclization of carbamoyl aspartate to dihydroorotate. The sequence is that of Dihydroorotase from Syntrophus aciditrophicus (strain SB).